A 305-amino-acid chain; its full sequence is Protein hrde-2 (305 aa).

Disordered stretches follow at residues 211-233 and 267-305; these read AEMV…PVPA and EMSN…EYCQ. The segment covering 215 to 227 has biased composition (polar residues); that stretch reads PSNTTGSSGSPMS. Residues 268–287 are compositionally biased toward acidic residues; the sequence is MSNDEYSPDESENDENEYDY. Basic and acidic residues predominate over residues 289–305; the sequence is NAARYDDGYDEGHEYCQ.

Expressed throughout the male and female germline.

The protein resides in the nucleus. Functionally, plays a role in germline RNA interference (RNAi), and in particular is required for piwi-interacting RNA (piRNA) gene silencing. Facilitates the binding of the argonaut protein hrde-1 to small interfering RNAs (siRNAs) targets that are required for transgenerational epigenetic inheritance and germline immortality. This Caenorhabditis elegans protein is Protein hrde-2.